Consider the following 117-residue polypeptide: Non-specific lipid-transfer protein 2B (117 aa).

A signal peptide spans 1–25 (MARAQLVLVALVAALLLAGPHTTMA). 4 cysteine pairs are disulfide-bonded: Cys-29–Cys-76, Cys-39–Cys-53, Cys-54–Cys-99, and Cys-74–Cys-113.

Belongs to the plant LTP family. In terms of tissue distribution, expressed in roots, mesocotyls and developing leaves.

Plant non-specific lipid-transfer proteins transfer phospholipids as well as galactolipids across membranes. May play a role in wax or cutin deposition in the cell walls of expanding epidermal cells and certain secretory tissues. The protein is Non-specific lipid-transfer protein 2B (LTP2-B) of Oryza sativa subsp. japonica (Rice).